The following is a 706-amino-acid chain: Polyribonucleotide nucleotidyltransferase (706 aa).

Positions 486 and 492 each coordinate Mg(2+). In terms of domain architecture, KH spans 553 to 612 (PRIHTIKISTDKIKDVIGKGGSVIRALTEETGTTIEIEDDGTVRIASTDGEKAKHAIRRI). Residues 622–690 (GRVYQGKVTR…RQGRVRLSIK (69 aa)) form the S1 motif domain.

The protein belongs to the polyribonucleotide nucleotidyltransferase family. In terms of assembly, component of the RNA degradosome, which is a multiprotein complex involved in RNA processing and mRNA degradation. Mg(2+) serves as cofactor.

It is found in the cytoplasm. It carries out the reaction RNA(n+1) + phosphate = RNA(n) + a ribonucleoside 5'-diphosphate. Involved in mRNA degradation. Catalyzes the phosphorolysis of single-stranded polyribonucleotides processively in the 3'- to 5'-direction. The polypeptide is Polyribonucleotide nucleotidyltransferase (Pectobacterium atrosepticum (strain SCRI 1043 / ATCC BAA-672) (Erwinia carotovora subsp. atroseptica)).